The primary structure comprises 332 residues: Arabinogalactan endo-beta-1,4-galactanase (332 aa).

The N-linked (GlcNAc...) asparagine glycan is linked to N111. The Proton donor role is filled by E135. The Nucleophile role is filled by E245.

Belongs to the glycosyl hydrolase 53 family.

It carries out the reaction The enzyme specifically hydrolyzes (1-&gt;4)-beta-D-galactosidic linkages in type I arabinogalactans.. This Humicola insolens (Soft-rot fungus) protein is Arabinogalactan endo-beta-1,4-galactanase.